Consider the following 386-residue polypeptide: Bifunctional enzyme IspD/IspF (386 aa).

The tract at residues 1-230 is 2-C-methyl-D-erythritol 4-phosphate cytidylyltransferase; sequence MNSVPSLPGQ…LEEQSMSVIP (230 aa). Positions 231–386 are 2-C-methyl-D-erythritol 2,4-cyclodiphosphate synthase; that stretch reads RTGMGFDVHR…AQAVATVVSG (156 aa). A divalent metal cation is bound by residues Asp237 and His239. Residues 237-239 and 263-264 contribute to the 4-CDP-2-C-methyl-D-erythritol 2-phosphate site; these read DVH and HS. Position 271 (His271) interacts with a divalent metal cation. 4-CDP-2-C-methyl-D-erythritol 2-phosphate is bound by residues 285–287, 361–364, and Arg371; these read DIG and TTTE.

In the N-terminal section; belongs to the IspD/TarI cytidylyltransferase family. IspD subfamily. This sequence in the C-terminal section; belongs to the IspF family. The cofactor is a divalent metal cation.

The enzyme catalyses 2-C-methyl-D-erythritol 4-phosphate + CTP + H(+) = 4-CDP-2-C-methyl-D-erythritol + diphosphate. It carries out the reaction 4-CDP-2-C-methyl-D-erythritol 2-phosphate = 2-C-methyl-D-erythritol 2,4-cyclic diphosphate + CMP. The protein operates within isoprenoid biosynthesis; isopentenyl diphosphate biosynthesis via DXP pathway; isopentenyl diphosphate from 1-deoxy-D-xylulose 5-phosphate: step 2/6. Its pathway is isoprenoid biosynthesis; isopentenyl diphosphate biosynthesis via DXP pathway; isopentenyl diphosphate from 1-deoxy-D-xylulose 5-phosphate: step 4/6. Its function is as follows. Bifunctional enzyme that catalyzes the formation of 4-diphosphocytidyl-2-C-methyl-D-erythritol from CTP and 2-C-methyl-D-erythritol 4-phosphate (MEP) (IspD), and catalyzes the conversion of 4-diphosphocytidyl-2-C-methyl-D-erythritol 2-phosphate (CDP-ME2P) to 2-C-methyl-D-erythritol 2,4-cyclodiphosphate (ME-CPP) with a corresponding release of cytidine 5-monophosphate (CMP) (IspF). The polypeptide is Bifunctional enzyme IspD/IspF (Novosphingobium aromaticivorans (strain ATCC 700278 / DSM 12444 / CCUG 56034 / CIP 105152 / NBRC 16084 / F199)).